A 472-amino-acid polypeptide reads, in one-letter code: Arabinose-proton symporter (472 aa).

Residues 1-29 are Cytoplasmic-facing; the sequence is MVTINTESALTPRSLRDTRRMNMFVSVAA. The chain crosses the membrane as a helical span at residues 30–50; it reads AVAGLLFGLDIGVIAGALPFI. At 51 to 63 the chain is on the periplasmic side; it reads TDHFVLTSRLQEW. Residues 64–84 traverse the membrane as a helical segment; sequence VVSSMMLGAAIGALFNGWLSF. At 85-91 the chain is on the cytoplasmic side; the sequence is RLGRKYS. The chain crosses the membrane as a helical span at residues 92 to 112; the sequence is LMAGAILFVLGSIGSAFATSV. Residues 113–114 are Periplasmic-facing; the sequence is EM. A helical transmembrane segment spans residues 115–135; sequence LIAARVVLGIAVGIASYTAPL. At 136–154 the chain is on the cytoplasmic side; that stretch reads YLSEMASENVRGKMISMYQ. The chain crosses the membrane as a helical span at residues 155-175; the sequence is LMVTLGIVLAFLSDTAFSYSG. The Periplasmic segment spans residues 176–178; the sequence is NWR. Residues 179–199 form a helical membrane-spanning segment; it reads AMLGVLALPAVLLIILVVFLP. At 200–257 the chain is on the cytoplasmic side; sequence NSPRWLAEKGRHIEAEEVLRMLRDTSEKAREELNEIRESLKLKQGGWALFKINRNVRR. A helical membrane pass occupies residues 258-278; the sequence is AVFLGMLLQAMQQFTGMNIIM. Residues 279-297 are Periplasmic-facing; that stretch reads YYAPRIFKMAGFTTTEQQM. The helical transmembrane segment at 298-318 threads the bilayer; that stretch reads IATLVVGLTFMFATFIAVFTV. Topologically, residues 319-325 are cytoplasmic; that stretch reads DKAGRKP. A helical membrane pass occupies residues 326–346; the sequence is ALKIGFSVMALGTLVLGYCLM. Topologically, residues 347–361 are periplasmic; the sequence is QFDNGTASSGLSWLS. Residues 362-382 form a helical membrane-spanning segment; the sequence is VGMTMMCIAGYAMSAAPVVWI. At 383–404 the chain is on the cytoplasmic side; that stretch reads LCSEIQPLKCRDFGITCSTTTN. 2 consecutive transmembrane segments (helical) span residues 405-425 and 426-446; these read WVSNMIIGATFLTLLDSIGAA and GTFWLYTALNIAFVGITFWLI. Residues 447 to 472 are Cytoplasmic-facing; the sequence is PETKNVTLEHIERKLMAGEKLRNIGV.

The protein belongs to the major facilitator superfamily. Sugar transporter (TC 2.A.1.1) family.

The protein resides in the cell inner membrane. It carries out the reaction L-arabinose(in) + H(+)(in) = L-arabinose(out) + H(+)(out). Functionally, uptake of L-arabinose across the cytoplasmic membrane with the concomitant transport of protons into the cell (symport system). The protein is Arabinose-proton symporter (araE) of Escherichia coli O157:H7.